Here is a 443-residue protein sequence, read N- to C-terminus: Probable glycine dehydrogenase (decarboxylating) subunit 1 (443 aa).

Belongs to the GcvP family. N-terminal subunit subfamily. In terms of assembly, the glycine cleavage system is composed of four proteins: P, T, L and H. In this organism, the P 'protein' is a heterodimer of two subunits.

It carries out the reaction N(6)-[(R)-lipoyl]-L-lysyl-[glycine-cleavage complex H protein] + glycine + H(+) = N(6)-[(R)-S(8)-aminomethyldihydrolipoyl]-L-lysyl-[glycine-cleavage complex H protein] + CO2. Functionally, the glycine cleavage system catalyzes the degradation of glycine. The P protein binds the alpha-amino group of glycine through its pyridoxal phosphate cofactor; CO(2) is released and the remaining methylamine moiety is then transferred to the lipoamide cofactor of the H protein. The chain is Probable glycine dehydrogenase (decarboxylating) subunit 1 from Chlorobium limicola (strain DSM 245 / NBRC 103803 / 6330).